The chain runs to 444 residues: UDP-N-acetylmuramate--L-alanine ligase (444 aa).

110 to 116 (GAHGKTS) is a binding site for ATP.

It belongs to the MurCDEF family.

It localises to the cytoplasm. It catalyses the reaction UDP-N-acetyl-alpha-D-muramate + L-alanine + ATP = UDP-N-acetyl-alpha-D-muramoyl-L-alanine + ADP + phosphate + H(+). The protein operates within cell wall biogenesis; peptidoglycan biosynthesis. Functionally, cell wall formation. This Streptococcus sanguinis (strain SK36) protein is UDP-N-acetylmuramate--L-alanine ligase.